We begin with the raw amino-acid sequence, 176 residues long: Ribosome maturation factor RimM (176 aa).

Residues 93-170 form the PRC barrel domain; the sequence is DGEYYHADLI…ELPTEIEGDT (78 aa).

This sequence belongs to the RimM family. In terms of assembly, binds ribosomal protein uS19.

Its subcellular location is the cytoplasm. Functionally, an accessory protein needed during the final step in the assembly of 30S ribosomal subunit, possibly for assembly of the head region. Essential for efficient processing of 16S rRNA. May be needed both before and after RbfA during the maturation of 16S rRNA. It has affinity for free ribosomal 30S subunits but not for 70S ribosomes. The sequence is that of Ribosome maturation factor RimM from Rhodopseudomonas palustris (strain BisB5).